We begin with the raw amino-acid sequence, 291 residues long: Proteasomal ubiquitin receptor ADRM1 homolog rpn1301 (291 aa).

One can recognise a Pru domain in the interval 1–114 (MSLITFKAGK…ERINSYIKDQ (114 aa)). Positions 135 to 162 (TVEQSEPIAQPTESSKESSEIGAPNSDE) are disordered. The 113-residue stretch at 178–290 (AQAGFGGSTV…ARFVSRNNGS (113 aa)) folds into the DEUBAD domain.

It belongs to the ADRM1 family. Component of the 19S proteasome regulatory particle complex. The 2 S.pombe rpn13 homologs, rpn1301 and rpn1302 are present at a 0.2-1 ratio.

Its subcellular location is the cytoplasm. It is found in the nucleus. Its function is as follows. Component of the 26S proteasome, a multiprotein complex involved in the ATP-dependent degradation of ubiquitinated proteins. This complex plays a key role in the maintenance of protein homeostasis by removing misfolded or damaged proteins, which could impair cellular functions, and by removing proteins whose functions are no longer required. Therefore, the proteasome participates in numerous cellular processes, including cell cycle progression, apoptosis, or DNA damage repair. Within the complex, functions as a proteasomal ubiquitin receptor. In Schizosaccharomyces pombe (strain 972 / ATCC 24843) (Fission yeast), this protein is Proteasomal ubiquitin receptor ADRM1 homolog rpn1301 (rpn1301).